Here is a 473-residue protein sequence, read N- to C-terminus: Putative malate dehydrogenase 1B (473 aa).

It belongs to the LDH/MDH superfamily. MDH type 2 family.

The chain is Putative malate dehydrogenase 1B (MDH1B) from Bos taurus (Bovine).